A 167-amino-acid polypeptide reads, in one-letter code: Modulator of smoothened protein (167 aa).

A run of 4 helical transmembrane segments spans residues 7-29 (ISGCLFLAADIFAIASIANPDWI), 68-88 (TLFFIILGIVSLTITCGLLVI), 101-121 (WIAFMGMVLFCMAALIFPVGF), and 139-159 (VGSSYVLFVLSIFFTIVGLLF).

The protein localises to the cell projection. It localises to the cilium membrane. It is found in the cell membrane. In terms of biological role, acts as a negative regulator of hedgehog signaling probably by promoting internalization and subsequent degradation of smoothened protein (SMO) present in the ciliary membrane. Plays a role in sonic hedgehog (SHH)-induced spinal neural progenitor cells differentiation. The polypeptide is Modulator of smoothened protein (Danio rerio (Zebrafish)).